The following is a 1535-amino-acid chain: Putative protein TIC 214 C-terminal part (1535 aa).

Disordered stretches follow at residues Glu264 to Asp283, Glu312 to Ala333, and Asp1263 to Lys1282.

It belongs to the TIC214 family. As to quaternary structure, part of the Tic complex.

It is found in the plastid. The protein localises to the chloroplast. Its function is as follows. Involved in protein precursor import into chloroplasts. May be part of an intermediate translocation complex acting as a protein-conducting channel at the inner envelope. The sequence is that of Putative protein TIC 214 C-terminal part from Piper cenocladum (Ant piper).